The chain runs to 283 residues: Ribose-phosphate pyrophosphokinase (283 aa).

ATP-binding positions include 34 to 36 and 89 to 90; these read DGE and RQ. Residues histidine 120 and aspartate 159 each contribute to the Mg(2+) site. Residue lysine 182 is part of the active site. Residues arginine 184 and aspartate 208 each coordinate D-ribose 5-phosphate.

This sequence belongs to the ribose-phosphate pyrophosphokinase family. Class III (archaeal) subfamily. Mg(2+) serves as cofactor.

It is found in the cytoplasm. It carries out the reaction D-ribose 5-phosphate + ATP = 5-phospho-alpha-D-ribose 1-diphosphate + AMP + H(+). Its pathway is metabolic intermediate biosynthesis; 5-phospho-alpha-D-ribose 1-diphosphate biosynthesis; 5-phospho-alpha-D-ribose 1-diphosphate from D-ribose 5-phosphate (route I): step 1/1. Involved in the biosynthesis of the central metabolite phospho-alpha-D-ribosyl-1-pyrophosphate (PRPP) via the transfer of pyrophosphoryl group from ATP to 1-hydroxyl of ribose-5-phosphate (Rib-5-P). The sequence is that of Ribose-phosphate pyrophosphokinase from Methanosarcina acetivorans (strain ATCC 35395 / DSM 2834 / JCM 12185 / C2A).